A 564-amino-acid polypeptide reads, in one-letter code: E3 ubiquitin-protein ligase hrd-like protein 1 (564 aa).

Residues 17–37 (SYLALSVLVAIVASVTVFTTF) traverse the membrane as a helical segment. An N-linked (GlcNAc...) asparagine glycan is attached at N53. 7 helical membrane-spanning segments follow: residues 61–81 (YGLN…HYIL), 86–106 (LIWV…RLII), 123–143 (QAFF…IGPQ), 148–168 (VMPW…QFIT), 185–205 (KISF…FLIS), 215–235 (PAVL…YILF), and 272–292 (LSFA…IFFL). Residues 335–373 (CVVCWELLGTSRRLPCSHQFHDWCLMWWLAQDSSCPTCR) form an RING-type; atypical zinc finger. A CUE domain is found at 432–474 (QLQTMLEQVREMFPQMSVDIIMTDLRQSGSAQSTIENILEGRI).

It is found in the membrane. Its function is as follows. Proposed to have a role in neuroprotection. This is E3 ubiquitin-protein ligase hrd-like protein 1 (hrdl-1) from Caenorhabditis elegans.